Reading from the N-terminus, the 463-residue chain is FAD-dependent monooxygenase str9 (463 aa).

FAD-binding residues include Glu37, Gly50, and Arg114. Residue Arg200 is part of the active site. Asp334 provides a ligand contact to FAD.

It belongs to the paxM FAD-dependent monooxygenase family.

Its pathway is mycotoxin biosynthesis. Its function is as follows. FAD-dependent monooxygenase; part of the gene cluster that mediates the biosynthesis of strobilurin A, an antifungal polyketide that contains a key beta-methoxyacrylate toxophore that targets the complex III of the mitochondrial electron transport chain. Strobilurin biosynthesis begins with construction of benzoyl CoA by step-wise elimination of ammonia from phenylalanine by the phenylalanine ammonia-lyase str11, oxygenation by str8 and retro-Claisen reaction to form benzoic acid, which is activated to its CoA thiolester benzoyl CoA by the dedicated CoA ligase str10. Benzoyl CoA forms the starter unit for the highly reducing polyketide synthase stpks1 that produces the polyketide prestrobilutin A. The FAD-dependent oxygenase str9 then catalyzes the key oxidative rearrangement responsible for the creation of the beta-methoxyacrylate toxophore. Str9 performs epoxidation of the 2,3 olefin of prestrobilutin A, followed by Meinwald rearrangement to furnish the aldehyde intermediate. Rapid enolization of the aldehyde intermediate would give the beta-methoxyacrylate skeleton and methylations catalyzed by str2 and str3 complete the synthesis and lead to the production of strobilurin A. The short-chain dehydrogenase stl2 and the dehydrogenase str4 play a role in the shunt pathway leading to the production of bolineol. The cluster encodes no obvious halogenase gene that could be involved in production of strobilurin B, nor any obvious dimethylallyl-transferase that could be involved in the production of strobilurin G. It is possible that unknown proteins encoded in, or near, the cluster (such as str1 or stl1) may form new classes of halogenases or dimethylally-transferases, or that the responsible genes are located elsewhere on the genome. Similarly, proteins encoded by str5/str6 hydrolases appear to have no chemical role in the biosynthesis of strobilurin A. Finally, no obvious self-resistance gene is found within the cluster. The polypeptide is FAD-dependent monooxygenase str9 (Strobilurus tenacellus).